A 225-amino-acid chain; its full sequence is NAD(P)H-quinone oxidoreductase subunit K, chloroplastic (225 aa).

The [4Fe-4S] cluster site is built by Cys43, Cys44, Cys108, and Cys139.

The protein belongs to the complex I 20 kDa subunit family. NDH is composed of at least 16 different subunits, 5 of which are encoded in the nucleus. It depends on [4Fe-4S] cluster as a cofactor.

The protein localises to the plastid. It is found in the chloroplast thylakoid membrane. It catalyses the reaction a plastoquinone + NADH + (n+1) H(+)(in) = a plastoquinol + NAD(+) + n H(+)(out). The catalysed reaction is a plastoquinone + NADPH + (n+1) H(+)(in) = a plastoquinol + NADP(+) + n H(+)(out). NDH shuttles electrons from NAD(P)H:plastoquinone, via FMN and iron-sulfur (Fe-S) centers, to quinones in the photosynthetic chain and possibly in a chloroplast respiratory chain. The immediate electron acceptor for the enzyme in this species is believed to be plastoquinone. Couples the redox reaction to proton translocation, and thus conserves the redox energy in a proton gradient. The chain is NAD(P)H-quinone oxidoreductase subunit K, chloroplastic from Atropa belladonna (Belladonna).